Here is a 173-residue protein sequence, read N- to C-terminus: Trafficking regulator of GLUT4 1 (173 aa).

Residues 1 to 10 show a composition bias toward pro residues; sequence MANPAQPPLQ. The segment at 1-20 is disordered; the sequence is MANPAQPPLQDPGSTSPLEL. The Cytoplasmic portion of the chain corresponds to 1 to 102; sequence MANPAQPPLQ…QDQEAPKDYL (102 aa). Phosphoserine occurs at positions 16, 43, 45, 70, 84, and 85. Residues 103 to 123 constitute an intramembrane region (helical); the sequence is VLAIASCFCPVWPLNLIPLIF. The Cytoplasmic segment spans residues 124–150; the sequence is SIMSRSSVQQGDLDGARRLGRLARLLS. Residues 151 to 171 traverse the membrane as a helical segment; sequence ITFIILGIVIIIVAVTVNFTV. Topologically, residues 172–173 are extracellular; sequence PK.

It belongs to the CD225/Dispanin family. In terms of assembly, interacts with SLC2A4; the interaction is required for proper SLC2A4 reacycling after insulin stimulation. Expressed specifically in white and brown adipose tissues.

It is found in the cell membrane. It localises to the endomembrane system. The protein resides in the cytoplasm. The protein localises to the perinuclear region. Its function is as follows. Regulates insulin-mediated adipose tissue glucose uptake and transport by modulation of SLC2A4 recycling. Not required for SLC2A4 membrane fusion upon an initial stimulus, but rather is necessary for proper protein recycling during prolonged insulin stimulation. This is Trafficking regulator of GLUT4 1 (Trarg1) from Mus musculus (Mouse).